The sequence spans 384 residues: Sialyltransferase-like protein 3 (384 aa).

Topologically, residues 1-5 are cytoplasmic; sequence MKRRH. A helical; Signal-anchor for type II membrane protein membrane pass occupies residues 6 to 26; the sequence is WSHPSCGLLLLVAVFCLLLVF. Residues 27-384 are Lumenal-facing; that stretch reads RCSQLRHSGD…FRLPPVSFYR (358 aa). N-linked (GlcNAc...) asparagine glycosylation is present at N241.

This sequence belongs to the glycosyltransferase 29 family.

The protein resides in the golgi apparatus membrane. Its function is as follows. Possesses sialyltransferase-like activity in vitro. Transfers sialic acid to the glycoprotein asialofetuin. The transferred sialic acid is linked to galactose of Gal-beta-1,3-GalNAc through alpha-2,6-linkage. The chain is Sialyltransferase-like protein 3 from Oryza sativa subsp. japonica (Rice).